The chain runs to 71 residues: Large ribosomal subunit protein bL31 (71 aa).

Zn(2+) is bound by residues Cys-16, Cys-18, Cys-37, and Cys-40.

This sequence belongs to the bacterial ribosomal protein bL31 family. Type A subfamily. In terms of assembly, part of the 50S ribosomal subunit. It depends on Zn(2+) as a cofactor.

In terms of biological role, binds the 23S rRNA. The chain is Large ribosomal subunit protein bL31 from Pseudoalteromonas atlantica (strain T6c / ATCC BAA-1087).